The primary structure comprises 206 residues: Putative acetyltransferase OgpAT (206 aa).

The 201-residue stretch at 5 to 205 (VVIRRATAAD…EVVVGRRLLD (201 aa)) folds into the N-acetyltransferase domain. Acetyl-CoA contacts are provided by residues 135–138 (HIDL), 144–148 (GRGVG), 175–177 (NPR), and His184.

Belongs to the acetyltransferase family. Monomer.

Its function is as follows. Binds acetyl-CoA, but not butyryl-CoA or decanoyl-CoA. May have acetyltransferase activity. In Oceanicola granulosus (strain ATCC BAA-861 / DSM 15982 / KCTC 12143 / HTCC2516), this protein is Putative acetyltransferase OgpAT.